The sequence spans 399 residues: S-adenosylmethionine synthase (399 aa).

ATP is bound at residue His-17. Asp-19 contacts Mg(2+). Glu-45 is a binding site for K(+). Residues Glu-58 and Gln-101 each coordinate L-methionine. The segment at 101–111 (QSADIAMGVDQ) is flexible loop. Residues 177 to 179 (DGK), 244 to 245 (RF), Asp-253, 259 to 260 (RK), Ala-276, and Lys-280 each bind ATP. Asp-253 contributes to the L-methionine binding site. Lys-284 serves as a coordination point for L-methionine.

The protein belongs to the AdoMet synthase family. In terms of assembly, homotetramer; dimer of dimers. Requires Mg(2+) as cofactor. K(+) serves as cofactor.

The protein localises to the cytoplasm. It carries out the reaction L-methionine + ATP + H2O = S-adenosyl-L-methionine + phosphate + diphosphate. The protein operates within amino-acid biosynthesis; S-adenosyl-L-methionine biosynthesis; S-adenosyl-L-methionine from L-methionine: step 1/1. Its function is as follows. Catalyzes the formation of S-adenosylmethionine (AdoMet) from methionine and ATP. The overall synthetic reaction is composed of two sequential steps, AdoMet formation and the subsequent tripolyphosphate hydrolysis which occurs prior to release of AdoMet from the enzyme. The sequence is that of S-adenosylmethionine synthase from Bacillus cereus (strain B4264).